The primary structure comprises 756 residues: Catalase-peroxidase (756 aa).

A cross-link (tryptophyl-tyrosyl-methioninium (Trp-Tyr) (with M-270)) is located at residues 91–244; it reads WHSAGTYRTG…LAAVQMGLIY (154 aa). Histidine 92 (proton acceptor) is an active-site residue. The disordered stretch occupies residues 198–230; it reads AQKKMQQPGDGTLVAEPENHANEESRTASGERN. A compositionally biased stretch (basic and acidic residues) spans 214-223; that stretch reads PENHANEESR. Residues 244–270 constitute a cross-link (tryptophyl-tyrosyl-methioninium (Tyr-Met) (with W-91)); the sequence is YVNPEGPEGVPDPVASARDIRETFGRM. Histidine 285 is a heme b binding site. A disordered region spans residues 371–390; sequence KNGAGAGKIPDAHDPSKRHA.

Belongs to the peroxidase family. Peroxidase/catalase subfamily. In terms of assembly, homodimer or homotetramer. Heme b serves as cofactor. Formation of the three residue Trp-Tyr-Met cross-link is important for the catalase, but not the peroxidase activity of the enzyme.

The enzyme catalyses H2O2 + AH2 = A + 2 H2O. It carries out the reaction 2 H2O2 = O2 + 2 H2O. Bifunctional enzyme with both catalase and broad-spectrum peroxidase activity. This Pseudomonas syringae pv. tomato (strain ATCC BAA-871 / DC3000) protein is Catalase-peroxidase.